The sequence spans 197 residues: Fucoxanthin-chlorophyll a-c binding protein D, chloroplastic (197 aa).

The transit peptide at 1-31 directs the protein to the chloroplast; the sequence is MKTAVIASLIAGAAAFAPAKNAARTSVATNM. 3 consecutive transmembrane segments (helical) span residues 73-94, 114-133, and 174-196; these read ISML…PGTI, PAGG…SSVM, and GRAA…SLLP.

The protein belongs to the fucoxanthin chlorophyll protein family. The LHC complex of chromophytic algae is composed of fucoxanthin, chlorophyll A and C bound non-covalently by fucoxanthin chlorophyll proteins (FCPs). The ratio of the pigments in LHC; fucoxanthin: chlorophyll C: chlorophyll A; (0.6-1): (0.1-0.3): (1).

It is found in the plastid. The protein localises to the chloroplast thylakoid membrane. The light-harvesting complex (LHC) functions as a light receptor, it captures and delivers excitation energy to photosystems with which it is closely associated. Energy is transferred from the carotenoid and chlorophyll C (or B) to chlorophyll A and the photosynthetic reaction centers where it is used to synthesize ATP and reducing power. The protein is Fucoxanthin-chlorophyll a-c binding protein D, chloroplastic (FCPD) of Phaeodactylum tricornutum (Diatom).